We begin with the raw amino-acid sequence, 106 residues long: Pyrimidine/purine nucleoside phosphorylase (106 aa).

It belongs to the nucleoside phosphorylase PpnP family.

The catalysed reaction is a purine D-ribonucleoside + phosphate = a purine nucleobase + alpha-D-ribose 1-phosphate. The enzyme catalyses adenosine + phosphate = alpha-D-ribose 1-phosphate + adenine. It catalyses the reaction cytidine + phosphate = cytosine + alpha-D-ribose 1-phosphate. It carries out the reaction guanosine + phosphate = alpha-D-ribose 1-phosphate + guanine. The catalysed reaction is inosine + phosphate = alpha-D-ribose 1-phosphate + hypoxanthine. The enzyme catalyses thymidine + phosphate = 2-deoxy-alpha-D-ribose 1-phosphate + thymine. It catalyses the reaction uridine + phosphate = alpha-D-ribose 1-phosphate + uracil. It carries out the reaction xanthosine + phosphate = alpha-D-ribose 1-phosphate + xanthine. Its function is as follows. Catalyzes the phosphorolysis of diverse nucleosides, yielding D-ribose 1-phosphate and the respective free bases. Can use uridine, adenosine, guanosine, cytidine, thymidine, inosine and xanthosine as substrates. Also catalyzes the reverse reactions. The chain is Pyrimidine/purine nucleoside phosphorylase from Paraburkholderia xenovorans (strain LB400).